A 490-amino-acid chain; its full sequence is Homoserine O-acetyltransferase (490 aa).

Positions 48–354 constitute an AB hydrolase-1 domain; that stretch reads NVILVCHALT…NSEYGHDAFL (307 aa). Catalysis depends on S153, which acts as the Nucleophile. R223 is a binding site for substrate. Active-site residues include D317 and H350. D351 provides a ligand contact to substrate. CBS domains follow at residues 377–434 and 438–490; these read MSHT…ANSI and MTKN…LYEK.

Belongs to the AB hydrolase superfamily. MetX family. As to quaternary structure, homodimer.

It is found in the cytoplasm. The catalysed reaction is L-homoserine + acetyl-CoA = O-acetyl-L-homoserine + CoA. It functions in the pathway amino-acid biosynthesis; L-methionine biosynthesis via de novo pathway; O-acetyl-L-homoserine from L-homoserine: step 1/1. Functionally, transfers an acetyl group from acetyl-CoA to L-homoserine, forming acetyl-L-homoserine. The polypeptide is Homoserine O-acetyltransferase (Methanosphaera stadtmanae (strain ATCC 43021 / DSM 3091 / JCM 11832 / MCB-3)).